We begin with the raw amino-acid sequence, 328 residues long: 2-oxoglutarate-dependent dioxygenase gloF (328 aa).

Residues 175–289 (DTSELRMNHY…RYSVAYFGKP (115 aa)) form the Fe2OG dioxygenase domain. His-201, Asp-203, and His-261 together coordinate Fe cation. Arg-280 provides a ligand contact to 2-oxoglutarate.

It belongs to the iron/ascorbate-dependent oxidoreductase family. Requires Fe(2+) as cofactor.

It participates in mycotoxin biosynthesis. Functionally, 2-oxoglutarate-dependent dioxygenase; part of the gene cluster that mediates the biosynthesis of pneumocandins, lipohexapeptides of the echinocandin family that prevent fungal cell wall formation by non-competitive inhibition of beta-1,3-glucan synthase. The 10,12-dimethylmyristoyl side chain is synthesized by the reducing polyketide synthase gloL/GLPKS4. The thioesterase gloN/GLHYD exclusively interacts with gloL/GLPKS4 to maintain turnover of the polyketide side chain. The 10R,12S-dimethylmyristic acid is then transferred to the first thiolation domain of the nonribosomal peptide synthetase gloA/GLNRPS4 by the acyl-AMP ligase gloD/GLligase, followed by its acylation to L-ornithine to trigger elongation of the cyclic hexapeptide. L-ornithine, 4R-hydroxyl-L-proline (generated from L-proline by the dioxygenase gloF/GLOXY2), 3S-hydroxyl-L-homotyrosine (generated by gloG/GLHtyB, gloH/GLHtyA, gloI/GLHtyC, gloJ/GLHtyD and hydroxylated at C-3 by the dioxygenase gloM/GLOXY1), 3R-hydroxyl-L-glutamine (generated from L-glutamine probably by the dioxygenase gloE/GLOXY3) and 3S-hydroxyl-L-proline (generated from L-proline by the dioxygenase gloF/GLOXY2 to yield pneumocandin B0), or 3S-hydroxyl-4S-methyl-L-proline (generated from L-leucine by the dioxygenase gloC/GLOXY4 to yield pneumocandin A0) are sequentially added to the growing chain. The last C domain of gloA/GLNRPS4 is proposed to be responsible for cyclization by condensation to form the peptide bond between L-ornithine and 3S-hydroxyl-4S-methyl-L-proline (for pneumocandin A0) or 3S-hydroxyl-L-proline (for pneumocandin B0). Finally, the subsequent C-4 hydroxylation of 3S-hydroxyl-L-homotyrosine and L-ornithine dihydroxylation at C-4 and C-5 are performed by the cytochrome P450 monooxygenases gloP/GLP450-1 and gloO/GLP450-2, respectively. This is 2-oxoglutarate-dependent dioxygenase gloF from Glarea lozoyensis (strain ATCC 20868 / MF5171).